The chain runs to 364 residues: Glycosyltransferase 8 domain-containing protein 1 (364 aa).

Topologically, residues 1 to 5 (MRRVH) are cytoplasmic. The helical; Signal-anchor for type II membrane protein transmembrane segment at 6–26 (ITVILLAAVIFLLVLHHNILG) threads the bilayer. At 27 to 364 (LSDILKRQNS…QFSLIRRHAE (338 aa)) the chain is on the lumenal side. 3 N-linked (GlcNAc...) asparagine glycosylation sites follow: Asn-102, Asn-247, and Asn-255.

This sequence belongs to the glycosyltransferase 8 family.

The protein localises to the membrane. This Xenopus laevis (African clawed frog) protein is Glycosyltransferase 8 domain-containing protein 1 (glt8d1).